Consider the following 924-residue polypeptide: Protein argonaute 4 (924 aa).

2 disordered regions span residues 1-37 (MDST…PPNV) and 159-185 (TRAN…RRPN). The segment covering 26–37 (LPPPPPVIPPNV) has biased composition (pro residues). Positions 162 to 173 (NGNGSPNGNESP) are enriched in low complexity. Residues 292-408 (PVVDFLIANQ…IPLELCALVP (117 aa)) enclose the PAZ domain. One can recognise a Piwi domain in the interval 577-885 (FILCVLPDKK…AAAQLGTFMK (309 aa)). Positions 584 to 591 (DKKNSDLY) match the Nuclear localization signal motif.

Belongs to the argonaute family. Ago subfamily. As to quaternary structure, interacts with NRPE1 (via C-terminus). Binding to NRPE1 is required for its function in RdDM. Interacts with turnip crinkle virus (TCV) capsid protein P38; this interaction inhibits probably RNA silencing ability of AGO4. Interacts with SDE3. Binds to RDM3. Binds chromatin at loci subject to transcriptional silencing. Interacts with MBD6. Expressed in embryos, mature leaves, vascular tissue of the sepals, stamens and stigma, at the tip of the style and siliques.

Its subcellular location is the nucleus. It localises to the nucleolus. It is found in the nucleoplasm. The protein resides in the cajal body. In terms of biological role, together with RDM3, required for transcriptional gene silencing (TGS) by DNA methylation and repressive histone modifications (H3K9me2) of several chromatin loci. Component of the RISC complex that associate with the small interfering RNA (siRNA) pathway involved in direct cytosine methylation at endogenous DNA repeats. Forms a AGO4/NRPE1/siRNA complex in cajal body, facilitating its function in RNA-directed gene silencing of target loci. Required for CpNpG and asymmetric DNA methylation as well as histone H3 'Lys-9' methylation (H3K9me) at SUP and SN1 loci. May be not required for CpG methylation. Required for the production and maintenance of retrotransposon SN1 and Copia and ribosomal 5S 25 nucleotide siRNAs specialized in gene silencing at chromatin level. Involved in de novo methylation of FWA gene and required for the maintenance of RNA-directed DNA methylation (RdDM) triggered by inverted repeat transgenes. Interacts with miRNA miR390 and miR172, targeting respectively TAS3 and AP2 mRNAs, and mediates cleavage of miRNA targets. Associates mainly with small RNAs of 24 nucleotide in length and preferentially recruits small RNAs with a 5' terminal adenosine. Targeted by the turnip yellows virus (TuYV) protein P0 (via F-box-like domain) for probable proteasome degradation and thereby inactivating AGO4 function in RNA silencing. Required for resistance to the bacterial pathogen P.syringae. Works independently of the RdDM pathway in mediating resistance to P.syringae. RdDM is involved in viral genome methylation as an epigenetic defense against geminiviruses. This is Protein argonaute 4 from Arabidopsis thaliana (Mouse-ear cress).